The primary structure comprises 600 residues: MNNQKYIRNFSIIAHIDHGKSTLADRLIEHCGGFQAREMSKQVLDSMDIEKERGITIKAQTVKLLYKAKDGNTYYLNLMDTPGHVDFAYEVSRSLAACEGSLLVVDSTQGVEAQTLANVYKAIENNHEIVPVLNKIDLPASEPEHVKQQIEDIIGIDASEALLISAKSGIGIDLVLEAIVNKLPPPKESSDDILKALLVDSWYDPYLGVVILVRIIDGALRKNMRIKMMATNSVYKVEHVGYFTPKKHIADVLYAGEIGFFTASIKQVADCKVGDTITDEKKPCEQALPGFKPNLPVVFCGFYPTDSSEFEYLKDSLAKLHLNDSSFEYEMESSSALGVGFRCGFLGLLHLEIIQERLSREFDLDLITTAPSVIYKIYMRDGESLEIYNPADLPNLQKIESIEEPWIKAIIIVPDEFLGAVLSLCTEKRGVQLDHSYIANRARIVYKLPLNEIVYDFYDRLKSCSKGYASFEWQMDVYAPSELVKLGILVNGKAVDALSTIVHRSRAEQTGRALCVRLKDLIPIQQIDIVIQASIGSRIIARETIKALRKDVLSKCYGGDITRKRKLLEKQKIGKKRMRQYGNIEIPQSAFIAALKIGDE.

One can recognise a tr-type G domain in the interval 5 to 187 (KYIRNFSIIA…AIVNKLPPPK (183 aa)). GTP-binding positions include 17–22 (DHGKST) and 134–137 (NKID).

This sequence belongs to the TRAFAC class translation factor GTPase superfamily. Classic translation factor GTPase family. LepA subfamily.

Its subcellular location is the cell inner membrane. It catalyses the reaction GTP + H2O = GDP + phosphate + H(+). Its function is as follows. Required for accurate and efficient protein synthesis under certain stress conditions. May act as a fidelity factor of the translation reaction, by catalyzing a one-codon backward translocation of tRNAs on improperly translocated ribosomes. Back-translocation proceeds from a post-translocation (POST) complex to a pre-translocation (PRE) complex, thus giving elongation factor G a second chance to translocate the tRNAs correctly. Binds to ribosomes in a GTP-dependent manner. The polypeptide is Elongation factor 4 (Rickettsia canadensis (strain McKiel)).